Reading from the N-terminus, the 621-residue chain is tRNA uridine 5-carboxymethylaminomethyl modification enzyme MnmG (621 aa).

9–14 (GGGHAG) serves as a coordination point for FAD. 270–284 (GPRYCPSIEDKIVKF) is an NAD(+) binding site.

The protein belongs to the MnmG family. In terms of assembly, homodimer. Heterotetramer of two MnmE and two MnmG subunits. It depends on FAD as a cofactor.

It localises to the cytoplasm. Functionally, NAD-binding protein involved in the addition of a carboxymethylaminomethyl (cmnm) group at the wobble position (U34) of certain tRNAs, forming tRNA-cmnm(5)s(2)U34. The chain is tRNA uridine 5-carboxymethylaminomethyl modification enzyme MnmG from Borreliella afzelii (strain PKo) (Borrelia afzelii).